Reading from the N-terminus, the 261-residue chain is Esterase citA (261 aa).

Catalysis depends on charge relay system residues S122, D207, and H235.

It belongs to the LovG family.

Its pathway is mycotoxin biosynthesis. Its function is as follows. Non-reducing polyketide synthase; part of the gene cluster that mediates the biosynthesis of the mycotoxin citrinin, a hepato-nephrotoxic compound to humans due to inhibition of respiration complex III. The pathway begins with the synthesis of a keto-aldehyde intermediate by the citrinin PKS (pksCT also named citS) from successive condensations of 4 malonyl-CoA units, presumably with a simple acetyl-CoA starter unit. Release of the keto-aldehyde intermediate is consistent with the presence of the C-terminal reductive release domain. CitA collaborates with citS by catalyzing the hydrolysis of ACP-bound acyl intermediates to free the ACP from stalled intermediates. CitB then catalyzes the oxidation of the C-12 methyl of the ketone intermediate to an alcohol intermediate which is further oxidized by the oxidoreductase citC to produce a bisaldehyde intermediate. The fourth catalytic step is catalyzed by the citD aldehyde dehydrogenase. The final transformation is the reduction of C-3 by citE to provide the chemically stable citrinin nucleus. CitE appears highly selective for its substrate as its presence in any context other than a full complement of citS and citA-D does not result in observable new compounds. The sequence is that of Esterase citA from Monascus ruber (Mold).